A 318-amino-acid chain; its full sequence is Thymidylate synthase (318 aa).

Residues Arg25 and 180-181 (RR) each bind dUMP. The active-site Nucleophile is Cys200. DUMP contacts are provided by residues 220 to 223 (RSGD), Asn231, and 261 to 263 (HIY). Residue Asp223 participates in (6R)-5,10-methylene-5,6,7,8-tetrahydrofolate binding. A (6R)-5,10-methylene-5,6,7,8-tetrahydrofolate-binding site is contributed by Ala317.

The protein belongs to the thymidylate synthase family. Bacterial-type ThyA subfamily. As to quaternary structure, homodimer.

Its subcellular location is the cytoplasm. The enzyme catalyses dUMP + (6R)-5,10-methylene-5,6,7,8-tetrahydrofolate = 7,8-dihydrofolate + dTMP. Its pathway is pyrimidine metabolism; dTTP biosynthesis. Catalyzes the reductive methylation of 2'-deoxyuridine-5'-monophosphate (dUMP) to 2'-deoxythymidine-5'-monophosphate (dTMP) while utilizing 5,10-methylenetetrahydrofolate (mTHF) as the methyl donor and reductant in the reaction, yielding dihydrofolate (DHF) as a by-product. This enzymatic reaction provides an intracellular de novo source of dTMP, an essential precursor for DNA biosynthesis. This Lactobacillus acidophilus (strain ATCC 700396 / NCK56 / N2 / NCFM) protein is Thymidylate synthase.